Consider the following 142-residue polypeptide: Large ribosomal subunit protein uL13 (142 aa).

Belongs to the universal ribosomal protein uL13 family. Part of the 50S ribosomal subunit.

This protein is one of the early assembly proteins of the 50S ribosomal subunit, although it is not seen to bind rRNA by itself. It is important during the early stages of 50S assembly. The sequence is that of Large ribosomal subunit protein uL13 from Cupriavidus metallidurans (strain ATCC 43123 / DSM 2839 / NBRC 102507 / CH34) (Ralstonia metallidurans).